Here is a 189-residue protein sequence, read N- to C-terminus: Lipid A acyltransferase PagP (189 aa).

A signal peptide spans Met1 to Ala23. Active-site residues include His61, Asp104, and Ser105.

It belongs to the lipid A palmitoyltransferase family. Homodimer.

It is found in the cell outer membrane. It carries out the reaction a lipid A + a 1,2-diacyl-sn-glycero-3-phosphocholine = a hepta-acyl lipid A + a 2-acyl-sn-glycero-3-phosphocholine. The catalysed reaction is a lipid IVA + a 1,2-diacyl-sn-glycero-3-phosphocholine = a lipid IVB + a 2-acyl-sn-glycero-3-phosphocholine. The enzyme catalyses a lipid IIA + a 1,2-diacyl-sn-glycero-3-phosphocholine = a lipid IIB + a 2-acyl-sn-glycero-3-phosphocholine. In terms of biological role, transfers a fatty acid residue from the sn-1 position of a phospholipid to the N-linked hydroxyfatty acid chain on the proximal unit of lipid A or its precursors. This Erwinia tasmaniensis (strain DSM 17950 / CFBP 7177 / CIP 109463 / NCPPB 4357 / Et1/99) protein is Lipid A acyltransferase PagP.